The chain runs to 76 residues: Sec-independent protein translocase protein TatA (76 aa).

Residues 1–21 traverse the membrane as a helical segment; it reads MGGISIWQLLIIVAIIVLLFG. The interval 43–76 is disordered; that stretch reads MADDKSQPQDASFEKVEAKEAASTEQKAKEKEQA.

This sequence belongs to the TatA/E family. As to quaternary structure, the Tat system comprises two distinct complexes: a TatABC complex, containing multiple copies of TatA, TatB and TatC subunits, and a separate TatA complex, containing only TatA subunits. Substrates initially bind to the TatABC complex, which probably triggers association of the separate TatA complex to form the active translocon.

Its subcellular location is the cell inner membrane. In terms of biological role, part of the twin-arginine translocation (Tat) system that transports large folded proteins containing a characteristic twin-arginine motif in their signal peptide across membranes. TatA could form the protein-conducting channel of the Tat system. This is Sec-independent protein translocase protein TatA from Actinobacillus pleuropneumoniae serotype 5b (strain L20).